The chain runs to 188 residues: Peptidyl-tRNA hydrolase (188 aa).

Phenylalanine 15 provides a ligand contact to tRNA. Histidine 20 acts as the Proton acceptor in catalysis. Residues tyrosine 64, asparagine 66, and asparagine 112 each coordinate tRNA.

It belongs to the PTH family. As to quaternary structure, monomer.

Its subcellular location is the cytoplasm. The catalysed reaction is an N-acyl-L-alpha-aminoacyl-tRNA + H2O = an N-acyl-L-amino acid + a tRNA + H(+). Its function is as follows. Hydrolyzes ribosome-free peptidyl-tRNAs (with 1 or more amino acids incorporated), which drop off the ribosome during protein synthesis, or as a result of ribosome stalling. In terms of biological role, catalyzes the release of premature peptidyl moieties from peptidyl-tRNA molecules trapped in stalled 50S ribosomal subunits, and thus maintains levels of free tRNAs and 50S ribosomes. This chain is Peptidyl-tRNA hydrolase, found in Borrelia recurrentis (strain A1).